The sequence spans 131 residues: Fluoride-specific ion channel FluC 1 (131 aa).

A run of 4 helical transmembrane segments spans residues 4-24 (LALPAWQASLVAIGAVPGAWL), 40-60 (HWGTFAVNMVAAFALGLVLAL), 73-93 (LILLIGVGFFGSLSTFSTFAV), and 108-128 (LVLAVGSILGGLLAVAAGVGL). The Na(+) site is built by Gly83 and Ser86.

It belongs to the fluoride channel Fluc/FEX (TC 1.A.43) family.

The protein localises to the cell inner membrane. The catalysed reaction is fluoride(in) = fluoride(out). Na(+) is not transported, but it plays an essential structural role and its presence is essential for fluoride channel function. Fluoride-specific ion channel. Important for reducing fluoride concentration in the cell, thus reducing its toxicity. This Prochlorococcus marinus (strain MIT 9313) protein is Fluoride-specific ion channel FluC 1.